The sequence spans 453 residues: Adenylyltransferase and sulfurtransferase MOCS3 (453 aa).

A Phosphothreonine modification is found at Thr-62. ATP-binding positions include Gly-101, Asp-122, 129-133 (SNFHR), Lys-146, and 190-191 (DN). Cys-231 and Cys-234 together coordinate Zn(2+). Residue Cys-248 is the Glycyl thioester intermediate; for adenylyltransferase activity of the active site. Zn(2+)-binding residues include Cys-306 and Cys-309. The region spanning 355–451 (QAKPHLLIDV…WTSNIDPNFP (97 aa)) is the Rhodanese domain. Cys-410 functions as the Cysteine persulfide intermediate; for sulfurtransferase activity in the catalytic mechanism.

It in the N-terminal section; belongs to the HesA/MoeB/ThiF family. UBA4 subfamily. Requires Zn(2+) as cofactor.

Its subcellular location is the cytoplasm. The protein localises to the cytosol. The enzyme catalyses [molybdopterin-synthase sulfur-carrier protein]-C-terminal Gly-Gly + ATP + H(+) = [molybdopterin-synthase sulfur-carrier protein]-C-terminal Gly-Gly-AMP + diphosphate. The catalysed reaction is [molybdopterin-synthase sulfur-carrier protein]-C-terminal Gly-Gly-AMP + S-sulfanyl-L-cysteinyl-[cysteine desulfurase] + AH2 = [molybdopterin-synthase sulfur-carrier protein]-C-terminal-Gly-aminoethanethioate + L-cysteinyl-[cysteine desulfurase] + A + AMP + 2 H(+). The protein operates within tRNA modification; 5-methoxycarbonylmethyl-2-thiouridine-tRNA biosynthesis. Its pathway is cofactor biosynthesis; molybdopterin biosynthesis. Functionally, plays a central role in 2-thiolation of mcm(5)S(2)U at tRNA wobble positions of cytosolic tRNA(Lys), tRNA(Glu) and tRNA(Gln). Also essential during biosynthesis of the molybdenum cofactor. Acts by mediating the C-terminal thiocarboxylation of sulfur carriers URM1 and MOCS2A. Its N-terminus first activates URM1 and MOCS2A as acyl-adenylates (-COAMP), then the persulfide sulfur on the catalytic cysteine is transferred to URM1 and MOCS2A to form thiocarboxylation (-COSH) of their C-terminus. The reaction probably involves hydrogen sulfide that is generated from the persulfide intermediate and that acts as a nucleophile towards URM1 and MOCS2A. Subsequently, a transient disulfide bond is formed. Does not use thiosulfate as sulfur donor; NFS1 probably acting as a sulfur donor for thiocarboxylation reactions. The polypeptide is Adenylyltransferase and sulfurtransferase MOCS3 (Drosophila sechellia (Fruit fly)).